Here is a 193-residue protein sequence, read N- to C-terminus: Xanthine phosphoribosyltransferase (193 aa).

Xanthine contacts are provided by L20 and T27. Residue 128–132 participates in 5-phospho-alpha-D-ribose 1-diphosphate binding; it reads ANGQA. K156 contacts xanthine.

Belongs to the purine/pyrimidine phosphoribosyltransferase family. Xpt subfamily. As to quaternary structure, homodimer.

The protein resides in the cytoplasm. It catalyses the reaction XMP + diphosphate = xanthine + 5-phospho-alpha-D-ribose 1-diphosphate. The protein operates within purine metabolism; XMP biosynthesis via salvage pathway; XMP from xanthine: step 1/1. Its function is as follows. Converts the preformed base xanthine, a product of nucleic acid breakdown, to xanthosine 5'-monophosphate (XMP), so it can be reused for RNA or DNA synthesis. The sequence is that of Xanthine phosphoribosyltransferase from Streptococcus pneumoniae (strain CGSP14).